The sequence spans 479 residues: Sulfate adenylyltransferase subunit 1 (479 aa).

The 215-residue stretch at 25 to 239 (KSLLRFLTCG…EVLETVDIQR (215 aa)) folds into the tr-type G domain. Positions 34–41 (GSVDDGKS) are G1. GTP is bound at residue 34–41 (GSVDDGKS). A G2 region spans residues 92-96 (GITID). The tract at residues 113-116 (DTPG) is G3. Residues 113–117 (DTPGH) and 168–171 (NKMD) each bind GTP. A G4 region spans residues 168-171 (NKMD). Positions 206-208 (SAL) are G5.

This sequence belongs to the TRAFAC class translation factor GTPase superfamily. Classic translation factor GTPase family. CysN/NodQ subfamily. In terms of assembly, heterodimer composed of CysD, the smaller subunit, and CysN.

The catalysed reaction is sulfate + ATP + H(+) = adenosine 5'-phosphosulfate + diphosphate. Its pathway is sulfur metabolism; hydrogen sulfide biosynthesis; sulfite from sulfate: step 1/3. In terms of biological role, with CysD forms the ATP sulfurylase (ATPS) that catalyzes the adenylation of sulfate producing adenosine 5'-phosphosulfate (APS) and diphosphate, the first enzymatic step in sulfur assimilation pathway. APS synthesis involves the formation of a high-energy phosphoric-sulfuric acid anhydride bond driven by GTP hydrolysis by CysN coupled to ATP hydrolysis by CysD. This is Sulfate adenylyltransferase subunit 1 from Salmonella newport (strain SL254).